The sequence spans 159 residues: Heavy metal-associated isoprenylated plant protein 28 (159 aa).

Residues 10–73 (LQTIEMRVHM…KVRKTGRRAE (64 aa)) enclose the HMA domain. Cys-21 and Cys-24 together coordinate a metal cation. Position 156 is a cysteine methyl ester (Cys-156). A lipid anchor (S-farnesyl cysteine) is attached at Cys-156. A propeptide spans 157–159 (SIM) (removed in mature form).

The protein belongs to the HIPP family.

Heavy-metal-binding protein. This is Heavy metal-associated isoprenylated plant protein 28 from Arabidopsis thaliana (Mouse-ear cress).